The following is a 308-amino-acid chain: Ornithine carbamoyltransferase (308 aa).

Residues 57 to 60, Gln-84, Arg-108, and 135 to 138 contribute to the carbamoyl phosphate site; these read STRT and HPCQ. Residues Asn-166, Asp-224, and 228 to 229 contribute to the L-ornithine site; that span reads SM. Carbamoyl phosphate contacts are provided by residues 264–265 and Arg-292; that span reads CL.

Belongs to the aspartate/ornithine carbamoyltransferase superfamily. OTCase family.

Its subcellular location is the cytoplasm. It catalyses the reaction carbamoyl phosphate + L-ornithine = L-citrulline + phosphate + H(+). It participates in amino-acid biosynthesis; L-arginine biosynthesis; L-arginine from L-ornithine and carbamoyl phosphate: step 1/3. Reversibly catalyzes the transfer of the carbamoyl group from carbamoyl phosphate (CP) to the N(epsilon) atom of ornithine (ORN) to produce L-citrulline. The polypeptide is Ornithine carbamoyltransferase (Ralstonia nicotianae (strain ATCC BAA-1114 / GMI1000) (Ralstonia solanacearum)).